The following is a 513-amino-acid chain: GMP synthase [glutamine-hydrolyzing] (513 aa).

One can recognise a Glutamine amidotransferase type-1 domain in the interval 9–198 (MILVLDFGSQ…VRRICDCTGE (190 aa)). C86 acts as the Nucleophile in catalysis. Residues H172 and E174 contribute to the active site. The region spanning 199–388 (WTMENFIDLE…LGIPEHLVWR (190 aa)) is the GMPS ATP-PPase domain. 226 to 232 (SGGVDSS) lines the ATP pocket.

Homodimer.

It carries out the reaction XMP + L-glutamine + ATP + H2O = GMP + L-glutamate + AMP + diphosphate + 2 H(+). It participates in purine metabolism; GMP biosynthesis; GMP from XMP (L-Gln route): step 1/1. Functionally, catalyzes the synthesis of GMP from XMP. This Staphylococcus carnosus (strain TM300) protein is GMP synthase [glutamine-hydrolyzing].